The chain runs to 154 residues: Urease accessory protein UreE (154 aa).

Residues 135–154 (PENGAYHGTGGHHHHHHDHE) form a disordered region. Positions 144–154 (GGHHHHHHDHE) are enriched in basic residues.

The protein belongs to the UreE family.

It localises to the cytoplasm. In terms of biological role, involved in urease metallocenter assembly. Binds nickel. Probably functions as a nickel donor during metallocenter assembly. In Teredinibacter turnerae (strain ATCC 39867 / T7901), this protein is Urease accessory protein UreE.